A 362-amino-acid polypeptide reads, in one-letter code: Formyltransferase/hydrolase complex Fhc subunit B (362 aa).

In terms of assembly, octaheteromer. Part of the formyltransferase/hydrolase complex fhc; composed of FhcA, FhcB, FhcC and FhcD.

It localises to the cytoplasm. The protein operates within one-carbon metabolism; formaldehyde degradation; formate from formaldehyde (H(4)MPT route): step 4/5. Its function is as follows. Involved in the transformation of 5-formyl tetrahydromethanopterin (5-formyl-H(4)MPT) to methanofuran (MFR) and formate via the formylmethanofuran (formyl-MFR). This is Formyltransferase/hydrolase complex Fhc subunit B (fhcB) from Methylorubrum extorquens (strain ATCC 14718 / DSM 1338 / JCM 2805 / NCIMB 9133 / AM1) (Methylobacterium extorquens).